Here is a 464-residue protein sequence, read N- to C-terminus: ERO1-like protein alpha (464 aa).

The signal sequence occupies residues 1–23 (MGRGWGLLVGLLGVVWLLRSGQG). Intrachain disulfides connect Cys35–Cys48, Cys37–Cys46, Cys85–Cys387, Cys94–Cys99, Cys94–Cys130, Cys99–Cys104, Cys207–Cys237, and Cys390–Cys393. 3 positions are modified to phosphoserine: Ser106, Ser142, and Ser144. 3 residues coordinate FAD: Arg186, Thr188, and Trp199. FAD-binding residues include Ser248 and His251. An N-linked (GlcNAc...) asparagine glycan is attached at Asn276. Residues Arg283 and Arg296 each coordinate FAD. Residue Asn380 is glycosylated (N-linked (GlcNAc...) asparagine).

Belongs to the EROs family. Predominantly monomer. May function both as a monomer and a homodimer. Interacts with PDILT. Interacts with ERP44; the interaction results in retention of ERO1A in the endoplasmic reticulum. FAD is required as a cofactor. N-glycosylated. In terms of processing, the Cys-94/Cys-99 and Cys-390/Cys-393 disulfide bonds constitute the redox-active center. The Cys-94/Cys-99 disulfide bond may accept electron from P4HB and funnel them to the active site disulfide Cys-390/Cys-393. The regulatory Cys-99/Cys-104 disulfide bond stabilizes the other regulatory bond Cys-94/Cys-130. Post-translationally, phosphorylated on Ser-144 by FAM20C in the Golgi which increases its enzymatic activity. Phosphorylation is induced by lactation. It is also induced by hypoxia and reductive stress.

The protein localises to the endoplasmic reticulum membrane. It is found in the golgi apparatus lumen. Its subcellular location is the secreted. The protein resides in the cell projection. It localises to the dendrite. With respect to regulation, enzyme activity is tightly regulated to prevent the accumulation of reactive oxygen species in the endoplasmic reticulum. Reversibly down-regulated by the formation of disulfide bonds between the active site Cys-94 and Cys-130, and between Cys-99 and Cys-104. Glutathione may be required to regulate its activity in the endoplasmic reticulum. Oxidoreductase involved in disulfide bond formation in the endoplasmic reticulum. Efficiently reoxidizes P4HB/PDI, the enzyme catalyzing protein disulfide formation, in order to allow P4HB to sustain additional rounds of disulfide formation. Following P4HB reoxidation, passes its electrons to molecular oxygen via FAD, leading to the production of reactive oxygen species (ROS) in the cell. Required for the proper folding of immunoglobulins. Plays an important role in ER stress-induced, CHOP-dependent apoptosis by activating the inositol 1,4,5-trisphosphate receptor IP3R1. The sequence is that of ERO1-like protein alpha from Rattus norvegicus (Rat).